The primary structure comprises 533 residues: Berberine bridge enzyme-like 12 (533 aa).

An N-terminal signal peptide occupies residues 1-20 (MYLIFLLFFAASYSMSLSSA). A disulfide bond links Cys32 and Cys95. N-linked (GlcNAc...) asparagine glycosylation is found at Asn35, Asn70, Asn133, Asn296, Asn412, and Asn417. The FAD-binding PCMH-type domain maps to 73–249 (SMPKPSIIIV…LAFKVKLVTV (177 aa)). The segment at residues 110-174 (HDYDGLSYVS…EVHAFPAGVC (65 aa)) is a cross-link (6-(S-cysteinyl)-8alpha-(pros-histidyl)-FAD (His-Cys)).

This sequence belongs to the oxygen-dependent FAD-linked oxidoreductase family. FAD is required as a cofactor. In terms of processing, the FAD cofactor is bound via a bicovalent 6-S-cysteinyl, 8alpha-N1-histidyl FAD linkage.

The protein localises to the secreted. Its subcellular location is the cell wall. This is Berberine bridge enzyme-like 12 from Arabidopsis thaliana (Mouse-ear cress).